Consider the following 246-residue polypeptide: NAD-dependent protein deacetylase (246 aa).

In terms of domain architecture, Deacetylase sirtuin-type spans 1–246 (MKKPDIQQLK…VIEEIVNSNS (246 aa)). Positions 25, 36, 37, 106, 108, 109, and 124 each coordinate NAD(+). Position 36 (Phe-36) interacts with nicotinamide. Positions 108 and 109 each coordinate nicotinamide. Catalysis depends on His-124, which acts as the Proton acceptor. Residues Cys-132, Cys-135, Cys-152, and Cys-155 each contribute to the Zn(2+) site. NAD(+)-binding residues include Ser-193, Ser-194, Asn-216, and Asp-233.

It belongs to the sirtuin family. Class U subfamily. Requires Zn(2+) as cofactor.

The protein resides in the cytoplasm. The enzyme catalyses N(6)-acetyl-L-lysyl-[protein] + NAD(+) + H2O = 2''-O-acetyl-ADP-D-ribose + nicotinamide + L-lysyl-[protein]. In terms of biological role, NAD-dependent protein deacetylase which modulates the activities of several enzymes which are inactive in their acetylated form. In Staphylococcus epidermidis (strain ATCC 12228 / FDA PCI 1200), this protein is NAD-dependent protein deacetylase.